A 480-amino-acid chain; its full sequence is NADH-quinone oxidoreductase subunit N (480 aa).

Helical transmembrane passes span 13–33, 41–61, 81–101, 107–127, 132–152, 167–187, 212–232, 245–265, 276–296, 314–334, 373–393, 413–433, and 454–474; these read ISPMLILCGVALLSLVVQFLI, PLWVLSILGILVAMYALYHTT, VWLSAIYLIAGLITLLVAPPF, TLFPEFFPLMLFCLSGMMFLT, LIVIFVGLEILSLSLYVMIGM, FLLGTFSSGFMLLGIAFLYGG, LGLGLFFVGVSFKAALVPFHS, ITGFMASAGKASALGLVIILF, VWKYLMGTIALISMTWGNIVA, AGYIVAGIACGAGLEALYYLF, ALALSLVFLSFAGFPPLIGFW, LLFGAVANSCIAFYYYMKITI, and PTLGFLIFLLCVFFTAGWIFF.

This sequence belongs to the complex I subunit 2 family. As to quaternary structure, NDH-1 is composed of 14 different subunits. Subunits NuoA, H, J, K, L, M, N constitute the membrane sector of the complex.

The protein resides in the cell inner membrane. The catalysed reaction is a quinone + NADH + 5 H(+)(in) = a quinol + NAD(+) + 4 H(+)(out). Its function is as follows. NDH-1 shuttles electrons from NADH, via FMN and iron-sulfur (Fe-S) centers, to quinones in the respiratory chain. The immediate electron acceptor for the enzyme in this species is believed to be ubiquinone. Couples the redox reaction to proton translocation (for every two electrons transferred, four hydrogen ions are translocated across the cytoplasmic membrane), and thus conserves the redox energy in a proton gradient. The chain is NADH-quinone oxidoreductase subunit N from Leptospira biflexa serovar Patoc (strain Patoc 1 / Ames).